Consider the following 376-residue polypeptide: NADPH oxidase organizer 1 (376 aa).

One can recognise a PX domain in the interval Met1 to Leu131. 2 SH3 domains span residues Leu163–Pro225 and Ser237–Leu296. Positions Gly302–Gln376 are disordered. A compositionally biased stretch (pro residues) spans Ala326–Pro335. The tract at residues Pro328 to Pro337 is proline-rich region; mediates mutually exclusive interactions with itself and NOXA1.

Interacts with NOX1, NOXA1, CYBA/p22phox and NCF2/p67phox. Interacts with SH3PXD2A and SH3PXD2B. In terms of tissue distribution, expressed in testis, small and large intestines, liver, kidney and pancreas. Isoform 3 is mainly expressed in colon. Isoform 1 is preferentially expressed in testis.

Its subcellular location is the cell membrane. Constitutively potentiates the superoxide-generating activity of NOX1 and NOX3 and is required for the biogenesis of otoconia/otolith, which are crystalline structures of the inner ear involved in the perception of gravity. Isoform 3 is more potent than isoform 1 in activating NOX3. Together with NOXA1, may also substitute to NCF1/p47phox and NCF2/p67phox in supporting the phagocyte NOX2/gp91phox superoxide-generating activity. The protein is NADPH oxidase organizer 1 (NOXO1) of Homo sapiens (Human).